The chain runs to 390 residues: Nucleosome assembly protein 1-like 1 (390 aa).

The segment covering 1–10 has biased composition (basic and acidic residues); it reads MADIDNKEQS. Residues 1-32 are disordered; it reads MADIDNKEQSELDQDLEDVEEVEEEETGEETK. At A2 the chain carries N-acetylalanine. S10 carries the post-translational modification Phosphoserine. Acidic residues predominate over residues 11–28; that stretch reads ELDQDLEDVEEVEEEETG. Phosphothreonine occurs at positions 62 and 64. A Phosphoserine modification is found at S69. An N6-acetyllysine modification is found at K116. The NAP1L motif motif lies at 125–150; the sequence is YEPTEEECEWKPDEEDEVSEELKEKA. Positions 131 to 143 are enriched in acidic residues; it reads ECEWKPDEEDEVS. Positions 131-163 are disordered; the sequence is ECEWKPDEEDEVSEELKEKAKIEDEKKDEEKED. S143 bears the Phosphoserine mark. The span at 144 to 163 shows a compositional bias: basic and acidic residues; sequence EELKEKAKIEDEKKDEEKED. Positions 272 to 278 match the Nuclear localization signal motif; that stretch reads IKKKQKH. Positions 345–375 are enriched in acidic residues; it reads AIEDDDDDYDEEGEEADEEGEEEGDEENDPD. The segment at 345–390 is disordered; that stretch reads AIEDDDDDYDEEGEEADEEGEEEGDEENDPDYDPKKDQNPAECKQQ. 5-glutamyl polyglycine is present on residues E358 and E359. Residues 376–390 are compositionally biased toward basic and acidic residues; that stretch reads YDPKKDQNPAECKQQ. C387 is modified (cysteine methyl ester). Residue C387 is the site of S-farnesyl cysteine attachment. The propeptide at 388–390 is removed in mature form; the sequence is KQQ.

It belongs to the nucleosome assembly protein (NAP) family. As to quaternary structure, homodimer. The dimer binds strongly and sequentially to single and double H2A-H2B heterodimers. Interacts with ERCC6; this interaction increases ERCC6 processivity. Interacts with RAD54. Interacts with SETD1A. Polyglycylated by TTLL10 on glutamate residues, resulting in polyglycine chains on the gamma-carboxyl group. Both polyglutamylation and polyglycylation modifications can coexist on the same protein on adjacent residues, and lowering polyglycylation levels increases polyglutamylation, and reciprocally. In terms of processing, polyglutamylated by TTLL4 on glutamate residues, resulting in polyglutamate chains on the gamma-carboxyl group. Both polyglutamylation and polyglycylation modifications can coexist on the same protein on adjacent residues, and lowering polyglycylation levels increases polyglutamylation, and reciprocally.

The protein localises to the nucleus. Its subcellular location is the melanosome. It localises to the cytoplasm. Its function is as follows. Histone chaperone that plays a role in the nuclear import of H2A-H2B and nucleosome assembly. Also participates in several important DNA repair mechanisms: greatly enhances ERCC6-mediated chromatin remodeling which is essential for transcription-coupled nucleotide excision DNA repair. Also stimulates homologous recombination (HR) by RAD51 and RAD54 which is essential in mitotic DNA double strand break (DSB) repair. Plays a key role in the regulation of embryonic neurogenesis. Promotes the proliferation of neural progenitors and inhibits neuronal differentiation during cortical development. Regulates neurogenesis via the modulation of RASSF10; regulates RASSF10 expression by promoting SETD1A-mediated H3K4 methylation at the RASSF10 promoter. The polypeptide is Nucleosome assembly protein 1-like 1 (Nap1l1) (Rattus norvegicus (Rat)).